The chain runs to 331 residues: Thiamine-monophosphate kinase (331 aa).

Residues Asp-43, Thr-59, Thr-60, and Asp-61 each coordinate Mg(2+). His-68 is a binding site for substrate. Mg(2+) contacts are provided by Asp-90, Asp-138, and Asp-231. 137-138 (GD) is a binding site for ATP. ATP is bound at residue Ser-233. Asp-234 serves as a coordination point for Mg(2+). The substrate site is built by Glu-284 and Trp-328.

The protein belongs to the thiamine-monophosphate kinase family.

It catalyses the reaction thiamine phosphate + ATP = thiamine diphosphate + ADP. The protein operates within cofactor biosynthesis; thiamine diphosphate biosynthesis; thiamine diphosphate from thiamine phosphate: step 1/1. Functionally, catalyzes the ATP-dependent phosphorylation of thiamine-monophosphate (TMP) to form thiamine-pyrophosphate (TPP), the active form of vitamin B1. The protein is Thiamine-monophosphate kinase of Corynebacterium glutamicum (strain ATCC 13032 / DSM 20300 / JCM 1318 / BCRC 11384 / CCUG 27702 / LMG 3730 / NBRC 12168 / NCIMB 10025 / NRRL B-2784 / 534).